The chain runs to 506 residues: MLPKVLLMLLNMFLALQWRVGPHIKLENKPPAQDKVVFGPQPQPSGKKLPARETELTADHTTERPRGKLTRASQILNTILSNYDHKLRPSIGEKPTVVTVKVFVNSLGPISILDMEYSIDIIFYQTWYDERLRYNDTFETLILHGNVVSQLWIPDTFFRNSKRTQEYDITIPNQMALIHKDGKVLYTVRMTIDARCSLHMLNFPMDSHSCPLSFSSFSYDEHEMIYKWENFKLKIDAKNTWKLLEFDFTGVNNKTEIISTPVGDFMVMTFFFNVSRRFGFIVFQNYIPSSVTTMLSWVSFWIKIEAAAARASVGVSSVLTMATLGTFSRKNFPRVSYLTALDFYIAICFVLCFCTLLEFTVLNFLTYNNIERQASPKFYQFPTNSRANARTRARARTRARARARARQQQEVFVCEIVTYEENAEEGYQWSPRSRRPQCPWRRCGRSYVCFRVLRKYFCMVPGCEGNNWQRGRICIHVYRLDNYSRVLFPITFFFFNVVYWVICLNL.

The N-terminal stretch at 1-17 (MLPKVLLMLLNMFLALQ) is a signal peptide. At 18–277 (WRVGPHIKLE…MTFFFNVSRR (260 aa)) the chain is on the extracellular side. Positions 32–65 (AQDKVVFGPQPQPSGKKLPARETELTADHTTERP) are disordered. The segment covering 50-65 (PARETELTADHTTERP) has biased composition (basic and acidic residues). N135 carries N-linked (GlcNAc...) asparagine glycosylation. Residues C196 and C210 are joined by a disulfide bond. Residue N253 is glycosylated (N-linked (GlcNAc...) asparagine). A helical membrane pass occupies residues 278–298 (FGFIVFQNYIPSSVTTMLSWV). Residues 299–308 (SFWIKIEAAA) lie on the Cytoplasmic side of the membrane. Residues 309-328 (ARASVGVSSVLTMATLGTFS) traverse the membrane as a helical segment. Over 329 to 344 (RKNFPRVSYLTALDFY) the chain is Extracellular. Residues 345–365 (IAICFVLCFCTLLEFTVLNFL) form a helical membrane-spanning segment. The Cytoplasmic segment spans residues 366-485 (TYNNIERQAS…HVYRLDNYSR (120 aa)). A helical transmembrane segment spans residues 486-506 (VLFPITFFFFNVVYWVICLNL).

Belongs to the ligand-gated ion channel (TC 1.A.9) family. Gamma-aminobutyric acid receptor (TC 1.A.9.5) subfamily. GABRE sub-subfamily. Heteropentamer, formed by a combination of alpha (GABRA1-6), beta (GABRB1-3), gamma (GABRG1-3), delta (GABRD), epsilon (GABRE), rho (GABRR1-3), pi (GABRP) and theta (GABRQ) chains, each subunit exhibiting distinct physiological and pharmacological properties. As to expression, expressed in brain and heart. Strongly expressed in locus ceruleus from the first postnatal day. Weakly expressed in other brainstem nuclei and in the hypothalamus. Found in the cerebral cortex of pups.

It is found in the cell membrane. Its subcellular location is the postsynaptic cell membrane. It carries out the reaction chloride(in) = chloride(out). Functionally, epsilon subunit of the heteropentameric ligand-gated chloride channel gated by gamma-aminobutyric acid (GABA), a major inhibitory neurotransmitter in the brain. GABA-gated chloride channels, also named GABA(A) receptors (GABAAR), consist of five subunits arranged around a central pore and contain GABA active binding site(s) located at the alpha and beta subunit interfaces. When activated by GABA, GABAARs selectively allow the flow of chloride anions across the cell membrane down their electrochemical gradient. GABARs containing epsilon subunit may also permit spontaneous chloride channel activity while preserving the structural information required for GABA-gated openings. GABARs containing epsilon subunit may regulate cardiac function. This is Gamma-aminobutyric acid receptor subunit epsilon from Rattus norvegicus (Rat).